We begin with the raw amino-acid sequence, 202 residues long: Imidazoleglycerol-phosphate dehydratase (202 aa).

This sequence belongs to the imidazoleglycerol-phosphate dehydratase family.

The protein localises to the cytoplasm. It carries out the reaction D-erythro-1-(imidazol-4-yl)glycerol 3-phosphate = 3-(imidazol-4-yl)-2-oxopropyl phosphate + H2O. Its pathway is amino-acid biosynthesis; L-histidine biosynthesis; L-histidine from 5-phospho-alpha-D-ribose 1-diphosphate: step 6/9. This Rhizobium johnstonii (strain DSM 114642 / LMG 32736 / 3841) (Rhizobium leguminosarum bv. viciae) protein is Imidazoleglycerol-phosphate dehydratase.